The primary structure comprises 428 residues: Sulfhydrogenase 1 subunit alpha (428 aa).

Residues Cys-65, Cys-68, Cys-418, and Cys-421 each contribute to the Ni(2+) site. Position 68 (Cys-68) interacts with Fe cation. Cys-421 contacts Fe cation.

Belongs to the [NiFe]/[NiFeSe] hydrogenase large subunit family. In terms of assembly, heterotetramer of alpha, beta, gamma and delta subunits. The nickel-containing alpha and delta subunits constitute the hydrogenase activity. The beta and gamma subunits (flavin-containing dimer) constitute the sulfur reductase activity. The cofactor is Ni(2+). Fe cation serves as cofactor.

The protein resides in the cytoplasm. The enzyme catalyses H2 + NADP(+) = NADPH + H(+). Functionally, part of a bifunctional enzyme complex that functions as an NADPH-dependent hydrogen-evolving hydrogenase with sulfur-reducing activity. May play a role in hydrogen cycling during fermentative growth. Activity not exhibited with NAD. The alpha and delta subunits form the hydrogenase component that catalyzes the reduction of protons to evolve hydrogen. The protein is Sulfhydrogenase 1 subunit alpha of Pyrococcus furiosus (strain ATCC 43587 / DSM 3638 / JCM 8422 / Vc1).